A 546-amino-acid chain; its full sequence is CTP synthase (546 aa).

Residues 1-269 (MRSKKTKFIF…DERLAEVLNI (269 aa)) are amidoligase domain. A CTP-binding site is contributed by serine 17. Serine 17 serves as a coordination point for UTP. Residues 18–23 (SLGKGL) and aspartate 75 each bind ATP. 2 residues coordinate Mg(2+): aspartate 75 and glutamate 143. Residues 150–152 (DIE), 190–195 (KTKPTQ), and lysine 226 contribute to the CTP site. Residues 190–195 (KTKPTQ) and lysine 226 each bind UTP. Residues 295 to 537 (RIAIVGKYVN…IRAALAQRDA (243 aa)) enclose the Glutamine amidotransferase type-1 domain. Glycine 357 is an L-glutamine binding site. The active-site Nucleophile; for glutamine hydrolysis is cysteine 384. L-glutamine contacts are provided by residues 385–388 (LGLQ), glutamate 408, and arginine 465. Active-site residues include histidine 510 and glutamate 512.

It belongs to the CTP synthase family. As to quaternary structure, homotetramer.

The enzyme catalyses UTP + L-glutamine + ATP + H2O = CTP + L-glutamate + ADP + phosphate + 2 H(+). It carries out the reaction L-glutamine + H2O = L-glutamate + NH4(+). The catalysed reaction is UTP + NH4(+) + ATP = CTP + ADP + phosphate + 2 H(+). It functions in the pathway pyrimidine metabolism; CTP biosynthesis via de novo pathway; CTP from UDP: step 2/2. Its activity is regulated as follows. Allosterically activated by GTP, when glutamine is the substrate; GTP has no effect on the reaction when ammonia is the substrate. The allosteric effector GTP functions by stabilizing the protein conformation that binds the tetrahedral intermediate(s) formed during glutamine hydrolysis. Inhibited by the product CTP, via allosteric rather than competitive inhibition. In terms of biological role, catalyzes the ATP-dependent amination of UTP to CTP with either L-glutamine or ammonia as the source of nitrogen. Regulates intracellular CTP levels through interactions with the four ribonucleotide triphosphates. The protein is CTP synthase of Myxococcus xanthus (strain DK1622).